We begin with the raw amino-acid sequence, 152 residues long: S-ribosylhomocysteine lyase (152 aa).

Fe cation contacts are provided by histidine 53, histidine 57, and cysteine 120.

It belongs to the LuxS family. In terms of assembly, homodimer. The cofactor is Fe cation.

It catalyses the reaction S-(5-deoxy-D-ribos-5-yl)-L-homocysteine = (S)-4,5-dihydroxypentane-2,3-dione + L-homocysteine. Its function is as follows. Involved in the synthesis of autoinducer 2 (AI-2) which is secreted by bacteria and is used to communicate both the cell density and the metabolic potential of the environment. The regulation of gene expression in response to changes in cell density is called quorum sensing. Catalyzes the transformation of S-ribosylhomocysteine (RHC) to homocysteine (HC) and 4,5-dihydroxy-2,3-pentadione (DPD). The chain is S-ribosylhomocysteine lyase from Enterococcus faecalis (strain ATCC 700802 / V583).